The primary structure comprises 174 residues: uncharacterized protein (174 aa).

This is an uncharacterized protein from Homo sapiens (Human).